The chain runs to 202 residues: Small ribosomal subunit protein uS5 (202 aa).

Residues L46–V109 enclose the S5 DRBM domain.

It belongs to the universal ribosomal protein uS5 family. In terms of assembly, part of the 30S ribosomal subunit. Contacts protein S4.

With S4 and S12 plays an important role in translational accuracy. The protein is Small ribosomal subunit protein uS5 of Thermofilum pendens (strain DSM 2475 / Hrk 5).